A 255-amino-acid polypeptide reads, in one-letter code: Putative mediator of RNA polymerase II transcription subunit 30 (255 aa).

Low complexity predominate over residues glutamine 58–proline 107. 2 disordered regions span residues glutamine 58–leucine 133 and asparagine 177–glutamine 207. Positions leucine 108–leucine 133 are enriched in polar residues. Residues asparagine 177 to asparagine 189 are compositionally biased toward basic and acidic residues. The segment covering asparagine 190–threonine 201 has biased composition (low complexity).

It belongs to the Mediator complex subunit 30 family. Highly divergent. In terms of assembly, component of the Mediator complex.

It is found in the nucleus. In terms of biological role, component of the Mediator complex, a coactivator involved in the regulated transcription of nearly all RNA polymerase II-dependent genes. Mediator functions as a bridge to convey information from gene-specific regulatory proteins to the basal RNA polymerase II transcription machinery. Mediator is recruited to promoters by direct interactions with regulatory proteins and serves as a scaffold for the assembly of a functional preinitiation complex with RNA polymerase II and the general transcription factors. The sequence is that of Putative mediator of RNA polymerase II transcription subunit 30 (med30) from Dictyostelium discoideum (Social amoeba).